We begin with the raw amino-acid sequence, 418 residues long: Putative ion-transport protein YfeO (418 aa).

Helical transmembrane passes span 10-30, 54-74, 99-119, 120-140, 149-169, 186-206, 223-243, 258-278, 300-320, 322-342, 343-363, and 371-391; these read LLLSLPAVAIGIASSLILIVV, DSPIWIIGVLTLTGIAVGLVI, ALPGLIVALILGLAGGVSLGP, EHPIMTVNIALAVAIGARLLP, ILASAGTIGALFGTPVAAALI, LFAPLMAAAAGALTTGLFFHP, ILSGAIVAAIAIAAGMVAVWC, VLVLGIGGFILGILGVIGGPV, DYFLLAVIKLAALVVAAASGF, GGRIFPAVFVGVALGLMLHEH, VPAVPAAITVSCAILGIVLVV, and LFMAAVVVPNTTLLPLLCIVM.

The protein belongs to the chloride channel (TC 2.A.49) family.

The protein localises to the cell membrane. In Shigella sonnei (strain Ss046), this protein is Putative ion-transport protein YfeO.